The sequence spans 62 residues: uncharacterized protein (62 aa).

The N-terminal stretch at 1–22 is a signal peptide; sequence MVNVALLLDQIIATPLRSMVEA.

This is an uncharacterized protein from Archaeoglobus fulgidus (strain ATCC 49558 / DSM 4304 / JCM 9628 / NBRC 100126 / VC-16).